The sequence spans 436 residues: MIDPQLLRKDIAAVAARLATRKFQLDVEKFNALESERKSLQTRTEELQAKRNQLSKAIGMKKGKGEGAAAEMAEVTQVNADMESGSSRLAVLQAEISDFLMGIPNLPDESVPASKDETENKEVKRWGEQPIFDFEVKDHVDLGGPLGLDFEVAAKISGSRFIVLKGPIARLHRALAQFMIDTHATEHQYQEVYAPYMVNAASMRGTGQLPKFEEDLFKVPRQMGGEDGNGEAKTENFYLIPTAEVPVTNLVRDEIVNTDNLPMKFVAHTPCFRSEAGSYGRDVRGMIRQHQFDKVELVQITKPEDSMQALEDLTGHAERILELLELPYRKVLLCTGDMGFGSTKTYDLEVWVPSQNAYREISSCSSMGDFQARRMQARFKVGQGKPELVHTLNGSGLAVGRALVALLENKQQVDGSIAIPKALQPYLGGLEVLKPI.

242–244 serves as a coordination point for L-serine; the sequence is TAE. 273–275 is a binding site for ATP; sequence RSE. Glu296 contributes to the L-serine binding site. 360-363 contacts ATP; it reads EISS. L-serine is bound at residue Ser395.

The protein belongs to the class-II aminoacyl-tRNA synthetase family. Type-1 seryl-tRNA synthetase subfamily. As to quaternary structure, homodimer. The tRNA molecule binds across the dimer.

It is found in the cytoplasm. It catalyses the reaction tRNA(Ser) + L-serine + ATP = L-seryl-tRNA(Ser) + AMP + diphosphate + H(+). The enzyme catalyses tRNA(Sec) + L-serine + ATP = L-seryl-tRNA(Sec) + AMP + diphosphate + H(+). The protein operates within aminoacyl-tRNA biosynthesis; selenocysteinyl-tRNA(Sec) biosynthesis; L-seryl-tRNA(Sec) from L-serine and tRNA(Sec): step 1/1. Its function is as follows. Catalyzes the attachment of serine to tRNA(Ser). Is also able to aminoacylate tRNA(Sec) with serine, to form the misacylated tRNA L-seryl-tRNA(Sec), which will be further converted into selenocysteinyl-tRNA(Sec). The polypeptide is Serine--tRNA ligase (Polynucleobacter necessarius subsp. necessarius (strain STIR1)).